The sequence spans 468 residues: 6-phospho-beta-galactosidase (468 aa).

5 residues coordinate D-galactose 6-phosphate: Q19, H116, N159, E160, and N297. The Proton donor role is filled by E160. The active-site Nucleophile is E375. The D-galactose 6-phosphate site is built by S428, W429, K435, and Y437.

It belongs to the glycosyl hydrolase 1 family.

It carries out the reaction a 6-phospho-beta-D-galactoside + H2O = D-galactose 6-phosphate + an alcohol. The protein operates within carbohydrate metabolism; lactose degradation; D-galactose 6-phosphate and beta-D-glucose from lactose 6-phosphate: step 1/1. This Streptococcus uberis (strain ATCC BAA-854 / 0140J) protein is 6-phospho-beta-galactosidase.